The sequence spans 455 residues: Beta-cyclopiazonate dehydrogenase (455 aa).

The first 25 residues, 1-25 (MAVRIARFLGLSTVAYLALANGIDA), serve as a signal peptide directing secretion.

This sequence belongs to the beta-cyclopiazonate dehydrogenase family. FAD serves as cofactor.

It catalyses the reaction beta-cyclopiazonate + A = alpha-cyclopiazonate + AH2. Its function is as follows. Beta-cyclopiazonate dehydrogenase involved in the synthesis of the fungal neurotoxin alpha-cyclopiazonic acid (CPA). CpaO carries out the dehydrogenation of beta-CPA to yield an unstable enimine product, which is captured by intramolecular cyclization to create the pentacyclic fused scaffold of alpha-cyclopiazonate. In Aspergillus oryzae (strain ATCC 42149 / RIB 40) (Yellow koji mold), this protein is Beta-cyclopiazonate dehydrogenase.